We begin with the raw amino-acid sequence, 340 residues long: Myomesin-1 (340 aa).

Positions 177 to 212 are disordered; that stretch reads AEKARLKSRPSAPXTGQIIVTEEEPSEEAGTENXQR. Over residues 197–206 the composition is skewed to acidic residues; sequence TEEEPSEEAG.

In terms of assembly, homodimer. Interacts with TTN/titin and PNKD. As to expression, seems to be expressed in all cardiac and skeletal fibers.

The protein localises to the cytoplasm. The protein resides in the myofibril. It is found in the sarcomere. Its subcellular location is the m line. Functionally, major component of the vertebrate myofibrillar M band. Binds myosin, titin, and light meromyosin. This binding is dose dependent. This chain is Myomesin-1 (MYOM1), found in Bos taurus (Bovine).